The sequence spans 840 residues: Leucine--tRNA ligase (840 aa).

Residues 44-55 (PYPSANGLHVGH) carry the 'HIGH' region motif. The short motif at 617-621 (KMSKS) is the 'KMSKS' region element. An ATP-binding site is contributed by K620.

Belongs to the class-I aminoacyl-tRNA synthetase family.

It localises to the cytoplasm. It carries out the reaction tRNA(Leu) + L-leucine + ATP = L-leucyl-tRNA(Leu) + AMP + diphosphate. In Borreliella burgdorferi (strain ATCC 35210 / DSM 4680 / CIP 102532 / B31) (Borrelia burgdorferi), this protein is Leucine--tRNA ligase.